Consider the following 478-residue polypeptide: Flotillin-like protein 1 (478 aa).

C35 carries the S-palmitoyl cysteine lipid modification. The stretch at 235–277 (ENQREAEVAEANSELAKKKAAWTMAAQVAELEAAKAVALREAE) forms a coiled coil.

It belongs to the band 7/mec-2 family. Flotillin subfamily. May be palmitoylated. In terms of tissue distribution, expressed in all plant organs. Primarily expressed in vascular tissues. No change in spatial expression in root upon inoculation. Expression limited to the nodule vascular tissue.

The protein localises to the cell membrane. Its subcellular location is the membrane. It localises to the caveola. May act as a scaffolding protein within caveolar membranes, functionally participating in formation of caveolae or caveolae-like vesicles. May be involved in nodule formation. This is Flotillin-like protein 1 (FLOT1) from Medicago truncatula (Barrel medic).